Here is a 347-residue protein sequence, read N- to C-terminus: D-fructose 1,6-bisphosphatase class 2/sedoheptulose 1,7-bisphosphatase (347 aa).

Positions 33, 57, 97, and 100 each coordinate Mn(2+). Substrate-binding positions include 100-102 (EGT), Tyr-131, 176-178 (RKR), and 198-200 (DGD). Mn(2+) is bound at residue Glu-225.

This sequence belongs to the FBPase class 2 family. Homotetramer. Mn(2+) is required as a cofactor.

The catalysed reaction is beta-D-fructose 1,6-bisphosphate + H2O = beta-D-fructose 6-phosphate + phosphate. It carries out the reaction D-sedoheptulose 1,7-bisphosphate + H2O = D-sedoheptulose 7-phosphate + phosphate. It participates in carbohydrate biosynthesis; Calvin cycle. Catalyzes the hydrolysis of fructose 1,6-bisphosphate (Fru 1,6-P2) and sedoheptulose 1,7-bisphosphate (Sed 1,7-P2) to fructose 6-phosphate and sedoheptulose 7-phosphate, respectively. This Synechococcus sp. (strain JA-3-3Ab) (Cyanobacteria bacterium Yellowstone A-Prime) protein is D-fructose 1,6-bisphosphatase class 2/sedoheptulose 1,7-bisphosphatase.